A 426-amino-acid polypeptide reads, in one-letter code: Glutamate-1-semialdehyde 2,1-aminomutase (426 aa).

N6-(pyridoxal phosphate)lysine is present on Lys-265.

The protein belongs to the class-III pyridoxal-phosphate-dependent aminotransferase family. HemL subfamily. In terms of assembly, homodimer. Pyridoxal 5'-phosphate is required as a cofactor.

It is found in the cytoplasm. The catalysed reaction is (S)-4-amino-5-oxopentanoate = 5-aminolevulinate. Its pathway is porphyrin-containing compound metabolism; protoporphyrin-IX biosynthesis; 5-aminolevulinate from L-glutamyl-tRNA(Glu): step 2/2. The polypeptide is Glutamate-1-semialdehyde 2,1-aminomutase (Yersinia pseudotuberculosis serotype O:1b (strain IP 31758)).